The primary structure comprises 91 residues: Small ribosomal subunit protein uS19 (91 aa).

The protein belongs to the universal ribosomal protein uS19 family.

Functionally, protein S19 forms a complex with S13 that binds strongly to the 16S ribosomal RNA. The protein is Small ribosomal subunit protein uS19 of Prochlorococcus marinus (strain SARG / CCMP1375 / SS120).